Here is a 390-residue protein sequence, read N- to C-terminus: Succinate--CoA ligase [ADP-forming] subunit beta (390 aa).

The 240-residue stretch at 9 to 248 (KDILRKFGVT…TSEEDPFEVE (240 aa)) folds into the ATP-grasp domain. ATP is bound by residues Lys50, 57–59 (GRG), Glu103, Met106, and Glu111. Asn203 and Asp217 together coordinate Mg(2+). Substrate-binding positions include Asn268 and 325 to 327 (GIV).

Belongs to the succinate/malate CoA ligase beta subunit family. As to quaternary structure, heterotetramer of two alpha and two beta subunits. Mg(2+) serves as cofactor.

The enzyme catalyses succinate + ATP + CoA = succinyl-CoA + ADP + phosphate. The catalysed reaction is GTP + succinate + CoA = succinyl-CoA + GDP + phosphate. It functions in the pathway carbohydrate metabolism; tricarboxylic acid cycle; succinate from succinyl-CoA (ligase route): step 1/1. Its function is as follows. Succinyl-CoA synthetase functions in the citric acid cycle (TCA), coupling the hydrolysis of succinyl-CoA to the synthesis of either ATP or GTP and thus represents the only step of substrate-level phosphorylation in the TCA. The beta subunit provides nucleotide specificity of the enzyme and binds the substrate succinate, while the binding sites for coenzyme A and phosphate are found in the alpha subunit. The sequence is that of Succinate--CoA ligase [ADP-forming] subunit beta from Chlorobium chlorochromatii (strain CaD3).